The sequence spans 312 residues: Ribose-phosphate pyrophosphokinase (312 aa).

ATP contacts are provided by residues Asp-34 to Glu-36 and Arg-93 to Gln-94. Positions 127 and 168 each coordinate Mg(2+). The active site involves Lys-192. Residues Arg-194, Asp-218, and Asp-222–Thr-226 each bind D-ribose 5-phosphate.

It belongs to the ribose-phosphate pyrophosphokinase family. Class I subfamily. In terms of assembly, homohexamer. Mg(2+) serves as cofactor.

The protein resides in the cytoplasm. It carries out the reaction D-ribose 5-phosphate + ATP = 5-phospho-alpha-D-ribose 1-diphosphate + AMP + H(+). It functions in the pathway metabolic intermediate biosynthesis; 5-phospho-alpha-D-ribose 1-diphosphate biosynthesis; 5-phospho-alpha-D-ribose 1-diphosphate from D-ribose 5-phosphate (route I): step 1/1. Functionally, involved in the biosynthesis of the central metabolite phospho-alpha-D-ribosyl-1-pyrophosphate (PRPP) via the transfer of pyrophosphoryl group from ATP to 1-hydroxyl of ribose-5-phosphate (Rib-5-P). This chain is Ribose-phosphate pyrophosphokinase, found in Caulobacter vibrioides (strain ATCC 19089 / CIP 103742 / CB 15) (Caulobacter crescentus).